The primary structure comprises 458 residues: Hepatocyte nuclear factor 3-beta (458 aa).

A transactivation domain 1 region spans residues 14–93 (DWSSYYAEPE…AGAMAGMSGS (80 aa)). The short motif at 106–113 (LSPSLSPL) is the Nuclear localization signal element. Position 156 is a phosphothreonine; by PKB/AKT1 (Thr156). The segment at residues 159 to 252 (KPPYSYISLI…ENGCYLRRQK (94 aa)) is a DNA-binding region (fork-head). Residues Ser212 and Ser283 each carry the phosphoserine modification. Residues 286-365 (QLGEAAGSAS…PGLPPEAHLK (80 aa)) form a disordered region. The span at 294–310 (ASETPAGTESPHSSASP) shows a compositional bias: polar residues. A Phosphothreonine modification is found at Thr301. Phosphoserine occurs at positions 303, 306, 307, and 309. Low complexity predominate over residues 339 to 352 (PGQQQQAAAHLLGP). A transactivation domain 2 region spans residues 361–458 (EAHLKPEHHY…VYSRPIMNSS (98 aa)). Residues Ser437 and Ser458 each carry the phosphoserine modification.

Binds DNA as a monomer. Binds TLE1. Interacts with FOXA1 and FOXA3. Interacts with PRKDC. Interacts with AKT1. Interacts with TET1; this interaction may recruit TET1 to specific genomic loci to mediate their demethylation. Post-translationally, phosphorylation on Thr-156 abolishes binding to target promoters and subsequent transcription activation upon insulin stimulation. In terms of tissue distribution, liver.

The protein resides in the nucleus. The protein localises to the cytoplasm. Functionally, transcription factor that is involved in embryonic development, establishment of tissue-specific gene expression and regulation of gene expression in differentiated tissues. Is thought to act as a 'pioneer' factor opening the compacted chromatin for other proteins through interactions with nucleosomal core histones and thereby replacing linker histones at target enhancer and/or promoter sites. Binds DNA with the consensus sequence 5'-[AC]A[AT]T[AG]TT[GT][AG][CT]T[CT]-3'. In embryonic development is required for notochord formation. Involved in the development of multiple endoderm-derived organ systems such as the liver, pancreas and lungs; FOXA1 and FOXA2 seem to have at least in part redundant roles. Originally described as a transcription activator for a number of liver genes such as AFP, albumin, tyrosine aminotransferase, PEPCK, etc. Interacts with the cis-acting regulatory regions of these genes. Involved in glucose homeostasis; regulates the expression of genes important for glucose sensing in pancreatic beta-cells and glucose homeostasis. Involved in regulation of fat metabolism. Acts synergistically with ONECUT1 to activate transcription of female-specific CYP2C12; the function is inhibited by growth hormone-activated STAT5B. Acts synergistically with HNF4A to activate transcription of APOA1. This chain is Hepatocyte nuclear factor 3-beta (Foxa2), found in Rattus norvegicus (Rat).